A 262-amino-acid polypeptide reads, in one-letter code: Ribose-5-phosphate isomerase A (262 aa).

Residues 33-36, 89-92, and 102-105 contribute to the substrate site; these read TGST, DGAD, and KGGG. The active-site Proton acceptor is the Glu111. A substrate-binding site is contributed by Lys129.

This sequence belongs to the ribose 5-phosphate isomerase family. As to quaternary structure, homodimer.

The catalysed reaction is aldehydo-D-ribose 5-phosphate = D-ribulose 5-phosphate. Its pathway is carbohydrate degradation; pentose phosphate pathway; D-ribose 5-phosphate from D-ribulose 5-phosphate (non-oxidative stage): step 1/1. Its function is as follows. Catalyzes the reversible conversion of ribose-5-phosphate to ribulose 5-phosphate. The protein is Ribose-5-phosphate isomerase A of Cereibacter sphaeroides (strain KD131 / KCTC 12085) (Rhodobacter sphaeroides).